The chain runs to 100 residues: Aspartyl/glutamyl-tRNA(Asn/Gln) amidotransferase subunit C (100 aa).

The protein belongs to the GatC family. Heterotrimer of A, B and C subunits.

It catalyses the reaction L-glutamyl-tRNA(Gln) + L-glutamine + ATP + H2O = L-glutaminyl-tRNA(Gln) + L-glutamate + ADP + phosphate + H(+). The catalysed reaction is L-aspartyl-tRNA(Asn) + L-glutamine + ATP + H2O = L-asparaginyl-tRNA(Asn) + L-glutamate + ADP + phosphate + 2 H(+). Its function is as follows. Allows the formation of correctly charged Asn-tRNA(Asn) or Gln-tRNA(Gln) through the transamidation of misacylated Asp-tRNA(Asn) or Glu-tRNA(Gln) in organisms which lack either or both of asparaginyl-tRNA or glutaminyl-tRNA synthetases. The reaction takes place in the presence of glutamine and ATP through an activated phospho-Asp-tRNA(Asn) or phospho-Glu-tRNA(Gln). This Streptococcus uberis (strain ATCC BAA-854 / 0140J) protein is Aspartyl/glutamyl-tRNA(Asn/Gln) amidotransferase subunit C.